The primary structure comprises 186 residues: Ribosome-recycling factor (186 aa).

The protein belongs to the RRF family.

It localises to the cytoplasm. Its function is as follows. Responsible for the release of ribosomes from messenger RNA at the termination of protein biosynthesis. May increase the efficiency of translation by recycling ribosomes from one round of translation to another. The chain is Ribosome-recycling factor from Herminiimonas arsenicoxydans.